We begin with the raw amino-acid sequence, 91 residues long: Class I hydrophobin E (91 aa).

The signal sequence occupies residues 1-16 (MKFSIAAIALAAVAVA). 4 disulfide bridges follow: cysteine 30-cysteine 72, cysteine 42-cysteine 64, cysteine 43-cysteine 55, and cysteine 73-cysteine 89. Residue asparagine 83 is glycosylated (N-linked (GlcNAc...) asparagine).

Belongs to the fungal hydrophobin family.

It localises to the secreted. It is found in the cell wall. The protein localises to the vacuole. Its subcellular location is the cytoplasmic vesicle. In terms of biological role, aerial growth, conidiation, and dispersal of filamentous fungi in the environment rely upon a capability of their secreting small amphipathic proteins called hydrophobins (HPBs) with low sequence identity. Class I can self-assemble into an outermost layer of rodlet bundles on aerial cell surfaces, conferring cellular hydrophobicity that supports fungal growth, development and dispersal; whereas Class II form highly ordered films at water-air interfaces through intermolecular interactions but contribute nothing to the rodlet structure. Hyd1E contributes to certain cell wall-related features, such as hydrophobicity but is not involved in cell wall-related events during fungal proliferation in host hemocoel. Does not contribute to conidial hydrophobicity. The chain is Class I hydrophobin E from Beauveria bassiana (strain ARSEF 2860) (White muscardine disease fungus).